The sequence spans 686 residues: Calponin homology and LIM domain-containing protein (686 aa).

A Calponin-homology (CH) domain is found at 15–120; that stretch reads ELALDESRDW…ITLYWLGRAA (106 aa). LIM zinc-binding domains lie at 139-200 and 219-279; these read MNCS…ATNL and NKCS…SCGK. Residues 305 to 314 are compositionally biased toward basic and acidic residues; the sequence is KQVMDKDGHD. Residues 305–345 form a disordered region; the sequence is KQVMDKDGHDHHHHNHNKPTTTTTTTNSNSPLAKKKSDSCK. Residues 322 to 333 show a composition bias toward low complexity; it reads KPTTTTTTTNSN. LIM zinc-binding domains lie at 373–435, 437–495, 519–579, and 583–658; these read GTCG…NNKS, KNCH…LNQY, DRCV…IQQS, and DHCA…ASSS.

In terms of assembly, interacts with limF and rab21.

In terms of biological role, involved in the regulation of phagocytosis. May repress rab21. The protein is Calponin homology and LIM domain-containing protein (ChLim) of Dictyostelium discoideum (Social amoeba).